Reading from the N-terminus, the 61-residue chain is Large ribosomal subunit protein uL30 (61 aa).

The protein belongs to the universal ribosomal protein uL30 family. Part of the 50S ribosomal subunit.

The protein is Large ribosomal subunit protein uL30 of Mycobacterium sp. (strain KMS).